A 165-amino-acid polypeptide reads, in one-letter code: Phosphopantetheine adenylyltransferase (165 aa).

Thr-10 lines the substrate pocket. Residues 10-11 (TF) and His-18 each bind ATP. Substrate contacts are provided by Lys-42, Leu-75, and Arg-89. ATP is bound by residues 90-92 (GVR), Glu-100, and 125-131 (VSFISSS).

Belongs to the bacterial CoaD family. In terms of assembly, homohexamer. It depends on Mg(2+) as a cofactor.

The protein resides in the cytoplasm. The catalysed reaction is (R)-4'-phosphopantetheine + ATP + H(+) = 3'-dephospho-CoA + diphosphate. Its pathway is cofactor biosynthesis; coenzyme A biosynthesis; CoA from (R)-pantothenate: step 4/5. In terms of biological role, reversibly transfers an adenylyl group from ATP to 4'-phosphopantetheine, yielding dephospho-CoA (dPCoA) and pyrophosphate. This is Phosphopantetheine adenylyltransferase from Buchnera aphidicola subsp. Schizaphis graminum (strain Sg).